A 542-amino-acid chain; its full sequence is 4-coumarate--CoA ligase 2 (542 aa).

Residues serine 189, serine 190, glycine 191, threonine 192, threonine 193, and lysine 197 each coordinate ATP. (E)-4-coumaroyl-AMP-binding residues include tyrosine 239 and serine 243. Residues tyrosine 239 and serine 243 each contribute to the (E)-caffeoyl-AMP site. (E)-feruloyl-AMP contacts are provided by tyrosine 239 and serine 243. Lysine 260 provides a ligand contact to CoA. Residues 262–331 (DIVSFLELIQ…AKFPNAKLGQ (70 aa)) form an SBD1 region. Alanine 309 lines the (E)-4-coumaroyl-AMP pocket. Alanine 309 is a binding site for (E)-caffeoyl-AMP. Alanine 309 serves as a coordination point for (E)-feruloyl-AMP. Positions 331, 332, and 336 each coordinate ATP. Residues glycine 332, threonine 336, methionine 344, aspartate 420, arginine 435, lysine 437, and lysine 441 each contribute to the (E)-4-coumaroyl-AMP site. Residues glycine 332, threonine 336, methionine 344, aspartate 420, arginine 435, lysine 437, and lysine 441 each contribute to the (E)-caffeoyl-AMP site. (E)-feruloyl-AMP-binding residues include glycine 332, threonine 336, methionine 344, aspartate 420, arginine 435, lysine 437, and lysine 441. AMP contacts are provided by glycine 332 and threonine 336. An SBD2 region spans residues 332-399 (GYGMTEAGPV…IRGDQIMKGY (68 aa)). ATP contacts are provided by aspartate 420 and arginine 435. An AMP-binding site is contributed by aspartate 420. Positions 437 and 441 each coordinate AMP. CoA contacts are provided by lysine 443 and glycine 444. Glutamine 446 is a binding site for AMP. Lysine 526 is an ATP binding site.

This sequence belongs to the ATP-dependent AMP-binding enzyme family. It depends on Mg(2+) as a cofactor. In terms of tissue distribution, mainly expressed in old stems and, to a lower extent, in flowers (e.g. in ovary), leaves, young stems, shoot tips and patel limbs.

The catalysed reaction is (E)-4-coumarate + ATP + CoA = (E)-4-coumaroyl-CoA + AMP + diphosphate. The enzyme catalyses (E)-caffeate + ATP + CoA = (E)-caffeoyl-CoA + AMP + diphosphate. It catalyses the reaction (E)-ferulate + ATP + CoA = (E)-feruloyl-CoA + AMP + diphosphate. It carries out the reaction (E)-cinnamate + ATP + CoA = (E)-cinnamoyl-CoA + AMP + diphosphate. The catalysed reaction is (E)-4-coumarate + ATP + H(+) = (E)-4-coumaroyl-AMP + diphosphate. The enzyme catalyses (E)-4-coumaroyl-AMP + CoA = (E)-4-coumaroyl-CoA + AMP + H(+). It catalyses the reaction (E)-caffeate + ATP + H(+) = (E)-caffeoyl-AMP + diphosphate. It carries out the reaction (E)-caffeoyl-AMP + CoA = (E)-caffeoyl-CoA + AMP + H(+). The catalysed reaction is (E)-ferulate + ATP + H(+) = (E)-feruloyl-AMP + diphosphate. The enzyme catalyses (E)-feruloyl-AMP + CoA = (E)-feruloyl-CoA + AMP + H(+). The protein operates within phytoalexin biosynthesis; 3,4',5-trihydroxystilbene biosynthesis; 3,4',5-trihydroxystilbene from trans-4-coumarate: step 1/2. In terms of biological role, major enzyme of the phenylpropanoid pathway that mediates the production of several precursors for numerous metabolites and regulates carbon flow. Catalyzes the formation of CoA thioesters using 4-coumarate, ferulate, caffeate, and cinnamate as substrates. Follows a two-step reaction mechanism, wherein a (hydroxy)cinnamate substrate first undergoes adenylation by ATP leading to an acyl-AMP, followed by a thioesterification in the presence of CoA to yield the final (hydroxy)cinnamoyl-CoA product. Almost inactive toward sinapate. This chain is 4-coumarate--CoA ligase 2, found in Nicotiana tabacum (Common tobacco).